Consider the following 218-residue polypeptide: Outer-membrane lipoprotein LolB (218 aa).

A signal peptide spans 1 to 20 (MSQVIRTLALTGLALAGLSG). A lipid anchor (N-palmitoyl cysteine) is attached at C21. C21 carries the S-diacylglycerol cysteine lipid modification.

Belongs to the LolB family. Monomer.

It localises to the cell outer membrane. Plays a critical role in the incorporation of lipoproteins in the outer membrane after they are released by the LolA protein. The polypeptide is Outer-membrane lipoprotein LolB (Xanthomonas campestris pv. campestris (strain B100)).